A 538-amino-acid polypeptide reads, in one-letter code: Calcium-dependent protein kinase 3 (538 aa).

The tract at residues 23 to 70 (PKKSIERIKKKKDSNKSIKSQHKFEGSKISNKNNELKDVKSKDPKNYE) is disordered. Residues 56-68 (NELKDVKSKDPKN) are compositionally biased toward basic and acidic residues. Residues 112–367 (NLSEEPLGKG…ASEALKHPWF (256 aa)) form the Protein kinase domain. ATP contacts are provided by residues 118–126 (LGKGTYGCV) and K141. The active-site Proton acceptor is the D232. The J domain autoinhibitory motif signature appears at 387 to 395 (NFKNYALLL). The tract at residues 387–422 (NFKNYALLLKLQKLAMTIIAQQSNDYDLQQLKAVFL) is j domain. A J domain EF-hand interaction motif motif is present at residues 396-405 (KLQKLAMTII). 3 EF-hand domains span residues 412 to 447 (YDLQ…SGLK), 450 to 481 (QNFD…DRKH), and 482 to 517 (LSKK…VILF). The Ca(2+) site is built by D460, D462, S464, R466, E471, D495, D497, D499, E501, and E506.

Belongs to the protein kinase superfamily. Ser/Thr protein kinase family. CDPK subfamily. The cofactor is Mg(2+).

The protein resides in the cytoplasm. It carries out the reaction L-seryl-[protein] + ATP = O-phospho-L-seryl-[protein] + ADP + H(+). The catalysed reaction is L-threonyl-[protein] + ATP = O-phospho-L-threonyl-[protein] + ADP + H(+). Its activity is regulated as follows. Activated by calcium. Upon calcium binding to the EF-hand domain 2, the C-terminus of the junction domain (J domain) undergoes a conformational change which results in the dissociation of the pseudo-substrate inhibitory motif from the catalytic domain. This, in turn, may facilitate the autophosphorylation of the activation loop at Thr-273, which leads to the kinase activation. Functionally, calcium-dependent protein kinase which acts as a sensor and effector of intracellular Ca(2+) levels probably in part downstream of cGMP-activated PKG kinase. In the mosquito midgut, regulates the gliding motility of the ookinete which is essential for the ookinete to invade the midgut epithelium. However, another study showed that while required for ookinete invasion of the midgut epithelium, is not required for ookinete gliding motility. The sequence is that of Calcium-dependent protein kinase 3 from Plasmodium yoelii yoelii.